Consider the following 516-residue polypeptide: Ribose import ATP-binding protein RbsA (516 aa).

ABC transporter domains follow at residues leucine 14–alanine 250 and alanine 261–glycine 504. Residue glycine 46–serine 53 participates in ATP binding.

The protein belongs to the ABC transporter superfamily. Ribose importer (TC 3.A.1.2.1) family. The complex is composed of an ATP-binding protein (RbsA), two transmembrane proteins (RbsC) and a solute-binding protein (RbsB).

It is found in the cell inner membrane. It catalyses the reaction D-ribose(out) + ATP + H2O = D-ribose(in) + ADP + phosphate + H(+). In terms of biological role, part of the ABC transporter complex RbsABC involved in ribose import. Responsible for energy coupling to the transport system. This chain is Ribose import ATP-binding protein RbsA, found in Jannaschia sp. (strain CCS1).